The chain runs to 408 residues: S100P-binding protein (408 aa).

Disordered stretches follow at residues 1-111, 162-234, and 271-291; these read MMCS…AETP, KDET…SENP, and VSTS…MKGH. Over residues 28–59 the composition is skewed to acidic residues; it reads SLDEDGLDDSLLELSEGEEDDGDVNYTEEEID. Composition is skewed to basic and acidic residues over residues 77–86 and 162–185; these read DGGHVEKGER and KDET…REDG. At Ser-187 the chain carries Phosphoserine. Residues 188–234 show a composition bias toward polar residues; that stretch reads PNESKLCTESEGISPNNSAWNGPQLSSSNNNFQQTVSDKNMPDSENP. Basic and acidic residues predominate over residues 280-291; that stretch reads VLNKDSGKMKGH.

In terms of assembly, interacts with S100P. As to expression, expressed in brain, spleen, and lung. Not detected in pancreas or liver. In pancreas, expressed predominantly in islet cells and to a lesser extent in acinar cells, but not expressed in ductal cells. Up-regulated in various pancreatic ductal adenocarcinomas and pancreatic intraepithelial neoplasias. Detected in pancreatic ductal adenocarcinoma cells (at protein level). Not detected in non-neoplastic ductal epithelium (at protein level).

Its subcellular location is the nucleus. This is S100P-binding protein from Homo sapiens (Human).